The following is a 182-amino-acid chain: Peptidyl-prolyl cis-trans isomerase ssp-1 (182 aa).

The 35-residue stretch at 7–41 (TGLPEDWEVRHSQSKNLPYYFNSATKTSRWEPPSG) folds into the WW domain. The PpiC domain maps to 71-182 (QGKIRCAHLL…SGLHLIERLE (112 aa)).

It carries out the reaction [protein]-peptidylproline (omega=180) = [protein]-peptidylproline (omega=0). Functionally, site-specific PPIase with respect to the amino acid N-terminal to the proline residue. Peptides with glutamate, phosphoserine, or phosphothreonine in the -1 position are the best substrates. It is not only able to isomerize small peptides but is also active in protein folding. In Neurospora crassa (strain ATCC 24698 / 74-OR23-1A / CBS 708.71 / DSM 1257 / FGSC 987), this protein is Peptidyl-prolyl cis-trans isomerase ssp-1 (ssp-1).